We begin with the raw amino-acid sequence, 725 residues long: Manganese-exporting P-type ATPase (725 aa).

One can recognise an HMA domain in the interval 25-92 (GRMRIQIEWV…AISGAAHVAA (68 aa)). 6 helical membrane-spanning segments follow: residues 101–119 (HSSD…GAAA), 142–160 (LVAS…RGAL), 165–179 (TGTD…IASL), 188–202 (LAVL…YLQD), 335–359 (VGEN…AITK), and 365–383 (MTVL…TPTA). Residue Asp-416 is the 4-aspartylphosphate intermediate of the active site. Mg(2+) contacts are provided by Asp-416, Thr-418, and Asp-618. Transmembrane regions (helical) follow at residues 669-688 (AVEV…AAGL) and 698-717 (PVLA…ANSS).

Belongs to the cation transport ATPase (P-type) (TC 3.A.3) family. Type IB subfamily.

Its subcellular location is the cell membrane. It carries out the reaction Mn(2+)(in) + ATP + H2O = Mn(2+)(out) + ADP + phosphate + H(+). Functionally, high affinity, slow turnover Mn(2+) transporting ATPase. The protein is Manganese-exporting P-type ATPase (ctpC) of Mycobacterium leprae (strain TN).